An 89-amino-acid chain; its full sequence is Small ribosomal subunit protein uS15 (89 aa).

Belongs to the universal ribosomal protein uS15 family. As to quaternary structure, part of the 30S ribosomal subunit. Forms a bridge to the 50S subunit in the 70S ribosome, contacting the 23S rRNA.

One of the primary rRNA binding proteins, it binds directly to 16S rRNA where it helps nucleate assembly of the platform of the 30S subunit by binding and bridging several RNA helices of the 16S rRNA. Functionally, forms an intersubunit bridge (bridge B4) with the 23S rRNA of the 50S subunit in the ribosome. The sequence is that of Small ribosomal subunit protein uS15 from Lactobacillus johnsonii (strain CNCM I-12250 / La1 / NCC 533).